Consider the following 192-residue polypeptide: Spermatogenesis-associated protein 3 (192 aa).

Over residues 1–15 (MKKVKKKRSEARRHR) the composition is skewed to basic residues. Disordered regions lie at residues 1–65 (MKKV…TTSR) and 161–184 (SRKP…GSGG). The segment covering 19 to 59 (SQHASSNSTSQQPSPESTPQQPSPESTPQQPSPESTPQHSS) has biased composition (low complexity).

The protein localises to the cell projection. The protein resides in the cilium. It localises to the flagellum. In Homo sapiens (Human), this protein is Spermatogenesis-associated protein 3 (SPATA3).